The chain runs to 32 residues: Photosystem II reaction center protein T (32 aa).

The helical transmembrane segment at 3-23 threads the bilayer; sequence ALVYTFLLIGTLVVIFFAIFF.

The protein belongs to the PsbT family. In terms of assembly, PSII is composed of 1 copy each of membrane proteins PsbA, PsbB, PsbC, PsbD, PsbE, PsbF, PsbH, PsbI, PsbJ, PsbK, PsbL, PsbM, PsbT, PsbX, PsbY, PsbZ, Psb30/Ycf12, at least 3 peripheral proteins of the oxygen-evolving complex and a large number of cofactors. It forms dimeric complexes.

The protein localises to the plastid. It is found in the chloroplast thylakoid membrane. Found at the monomer-monomer interface of the photosystem II (PS II) dimer, plays a role in assembly and dimerization of PSII. PSII is a light-driven water plastoquinone oxidoreductase, using light energy to abstract electrons from H(2)O, generating a proton gradient subsequently used for ATP formation. The sequence is that of Photosystem II reaction center protein T from Emiliania huxleyi (Coccolithophore).